Consider the following 554-residue polypeptide: Hydroxylamine reductase (554 aa).

[2Fe-2S] cluster contacts are provided by cysteine 3, cysteine 6, cysteine 18, and cysteine 25. Hybrid [4Fe-2O-2S] cluster-binding residues include histidine 252, glutamate 276, cysteine 320, cysteine 408, cysteine 436, cysteine 461, glutamate 495, and lysine 497. Cysteine 408 bears the Cysteine persulfide mark.

Belongs to the HCP family. [2Fe-2S] cluster is required as a cofactor. The cofactor is hybrid [4Fe-2O-2S] cluster.

Its subcellular location is the cytoplasm. It catalyses the reaction A + NH4(+) + H2O = hydroxylamine + AH2 + H(+). Its function is as follows. Catalyzes the reduction of hydroxylamine to form NH(3) and H(2)O. The chain is Hydroxylamine reductase from Shewanella sp. (strain MR-4).